We begin with the raw amino-acid sequence, 315 residues long: Methionyl-tRNA formyltransferase (315 aa).

112 to 115 (SLLP) serves as a coordination point for (6S)-5,6,7,8-tetrahydrofolate.

Belongs to the Fmt family.

It catalyses the reaction L-methionyl-tRNA(fMet) + (6R)-10-formyltetrahydrofolate = N-formyl-L-methionyl-tRNA(fMet) + (6S)-5,6,7,8-tetrahydrofolate + H(+). Its function is as follows. Attaches a formyl group to the free amino group of methionyl-tRNA(fMet). The formyl group appears to play a dual role in the initiator identity of N-formylmethionyl-tRNA by promoting its recognition by IF2 and preventing the misappropriation of this tRNA by the elongation apparatus. This Rhizobium rhizogenes (strain K84 / ATCC BAA-868) (Agrobacterium radiobacter) protein is Methionyl-tRNA formyltransferase.